The following is a 549-amino-acid chain: SET and MYND domain-containing protein DDB_G0277331 (549 aa).

Residues 27-283 (KGIELRYCDG…KDEELFINYS (257 aa)) form the SET domain. Positions 71, 74, 90, 93, 99, 103, 111, and 115 each coordinate Zn(2+). An MYND-type zinc finger spans residues 71-115 (CDECLKNKLDLEEGKTLKRCSNCKLVYYCSTDCQTKAWKIHKQEC). Residues 340-401 (NINNNNNNNN…IIKNLQNKLS (62 aa)) adopt a coiled-coil conformation.

It belongs to the class V-like SAM-binding methyltransferase superfamily.

Probable methyltransferase. The protein is SET and MYND domain-containing protein DDB_G0277331 of Dictyostelium discoideum (Social amoeba).